The chain runs to 457 residues: D(1B) dopamine receptor (457 aa).

Residues 1–41 (MYQPFQHLDSDQVASWQSPEMLMNKSVSRESQRRKELVAGQ) lie on the Extracellular side of the membrane. The N-linked (GlcNAc...) asparagine glycan is linked to asparagine 24. The helical transmembrane segment at 42–67 (IVTGSLLLLLIFWTLFGNILVCTAVM) threads the bilayer. The Cytoplasmic portion of the chain corresponds to 68–78 (RFRHLRSRVTN). A helical membrane pass occupies residues 79–105 (IFIVSLAVSDLLVALLVMPWKAVAEVA). Topologically, residues 106 to 114 (GHWPFGAFC) are extracellular. A disulfide bridge links cysteine 114 with cysteine 199. Residues 115 to 137 (DIWVAFDIMCSTASILNLCVISV) form a helical membrane-spanning segment. Residues 138 to 156 (DRYWAISSPFRYERKMTQR) lie on the Cytoplasmic side of the membrane. The helical transmembrane segment at 157 to 181 (VALLMISTAWALSVLISFIPVQLSW) threads the bilayer. Over 182-205 (HKSETEDHLLSNHSTGNCDSSLNR) the chain is Extracellular. The helical transmembrane segment at 206–231 (TYAISSSLISFYIPVAIMIVTYTRIY) threads the bilayer. The Cytoplasmic portion of the chain corresponds to 232–282 (RIAQIQIKRISTLERAAEHAQSCRSNRVDSCSRHHQTSLRTSIKKETKVLK). A helical transmembrane segment spans residues 283 to 309 (TLSIIMGVFVCCWLPFFILNCMVPFCD). The Extracellular portion of the chain corresponds to 310 to 326 (RSPGHPQAGLPCVSETT). A helical transmembrane segment spans residues 327 to 351 (FDIFVWFGWANSSLNPIIYAFNADF). At 352–457 (RKVFSSLLGC…ITPSMSNGIH (106 aa)) the chain is on the cytoplasmic side. Cysteine 361 carries the S-palmitoyl cysteine lipid modification.

Belongs to the G-protein coupled receptor 1 family. As to expression, brain and kidney.

It localises to the cell membrane. Functionally, dopamine receptor whose activity is mediated by G proteins which activate adenylyl cyclase. This Xenopus laevis (African clawed frog) protein is D(1B) dopamine receptor (drd5).